A 368-amino-acid polypeptide reads, in one-letter code: Xaa-Pro dipeptidase (368 aa).

Mn(2+) contacts are provided by D223, D234, H298, E327, and E341.

Belongs to the peptidase M24B family. Requires Mn(2+) as cofactor.

It localises to the cytoplasm. The catalysed reaction is Xaa-L-Pro dipeptide + H2O = an L-alpha-amino acid + L-proline. The protein is Xaa-Pro dipeptidase (pepQ) of Lactobacillus helveticus (Lactobacillus suntoryeus).